Here is a 319-residue protein sequence, read N- to C-terminus: METKGGTVKAASGFNATEDAQVLRKAMKGLGTDEDAIIGVLACRNTAQRQEIRTAYKSTIGRDLLEDLKSELSSNFEQVILGMMTPTVLYDVQELRRAMKGAGTDEGCLIEILASRNPEEIRRINQTYQQQYGRSLEEDICSDTSFMFQRVLVSLTAGGRDEGNYLDDALVRQDAQDLYEAGEKRWGTDEVKFLSILCSRNRNHLLHVFDEYKRISQKDIEQSIKSETSGSFEDALLAIVKCMRNKPAYFAERLYKSMKGLGTDDSTLIRVMVSRAEIDMLDIPANFKRVYGKSLYSFIKGDTSGDYRKVLLILCGGDD.

Thr7 is modified (phosphothreonine). Ser12 is modified (phosphoserine). Annexin repeat units lie at residues 14 to 85 (FNAT…GMMT), 86 to 157 (PTVL…SLTA), 169 to 241 (ALVR…AIVK), and 245 to 316 (NKPA…ILCG). Residues Lys213, Lys293, and Lys300 each carry the N6-acetyllysine modification.

Belongs to the annexin family.

It is found in the zymogen granule membrane. Calcium/phospholipid-binding protein which promotes membrane fusion and is involved in exocytosis. The chain is Annexin A4 (Anxa4) from Rattus norvegicus (Rat).